A 467-amino-acid polypeptide reads, in one-letter code: GTPase Der (467 aa).

EngA-type G domains follow at residues 25–188 (PVVA…PEAP) and 199–372 (RRVA…ASWE). GTP contacts are provided by residues 31–38 (GRPNVGKS), 78–82 (DTGGW), 140–143 (NKAD), 205–212 (GRPNVGKS), 252–256 (DTAGL), and 317–320 (NKWD). Residues 373–455 (TRVPTAQLNA…PIEISVRARK (83 aa)) form the KH-like domain.

Belongs to the TRAFAC class TrmE-Era-EngA-EngB-Septin-like GTPase superfamily. EngA (Der) GTPase family. As to quaternary structure, associates with the 50S ribosomal subunit.

Functionally, GTPase that plays an essential role in the late steps of ribosome biogenesis. The chain is GTPase Der from Salinispora tropica (strain ATCC BAA-916 / DSM 44818 / JCM 13857 / NBRC 105044 / CNB-440).